A 388-amino-acid polypeptide reads, in one-letter code: MNLHEYQAKQLFARYGLPAPVGYACNTPREAEEAASKIGSGPWVVKCQVHAGGRGKAGGVKVVKSKEEIRAFAEHWLGKRLVTYQTDANGQPVNQILVEAATDIAKELYLGAVVDRSSRRVVFMASTEGGVEIEKVAEETPHLIHKVAIDPLAGPMPYQGRELAFKLGLEGKLVQQFTKIFMGLAKIFLERDLALIEINPLVITTQGDLICLDGKLGADGNALFRQSDLREMRDQSQEDPREAQAAQWELNYVALDGNIGCMVNGAGLAMGTMDIVKLHGGEPANFLDVGGGATKERVTEAFKIILSDDKVKAVLVNIFGGIVRCDLIADGIIGAVEEVGVNVPVVVRLEGNNAELGAKKLADSGLNIIAAKSLTDAAQQVVAAVEGK.

Residues 9-244 (KQLFARYGLP…QSQEDPREAQ (236 aa)) enclose the ATP-grasp domain. Residues Lys-46, 53-55 (GRG), Glu-99, Thr-102, and Glu-107 each bind ATP. Mg(2+)-binding residues include Asn-199 and Asp-213. Substrate is bound by residues Asn-264 and 321–323 (GIV).

Belongs to the succinate/malate CoA ligase beta subunit family. As to quaternary structure, heterotetramer of two alpha and two beta subunits. Mg(2+) serves as cofactor.

It catalyses the reaction succinate + ATP + CoA = succinyl-CoA + ADP + phosphate. The enzyme catalyses GTP + succinate + CoA = succinyl-CoA + GDP + phosphate. It participates in carbohydrate metabolism; tricarboxylic acid cycle; succinate from succinyl-CoA (ligase route): step 1/1. Succinyl-CoA synthetase functions in the citric acid cycle (TCA), coupling the hydrolysis of succinyl-CoA to the synthesis of either ATP or GTP and thus represents the only step of substrate-level phosphorylation in the TCA. The beta subunit provides nucleotide specificity of the enzyme and binds the substrate succinate, while the binding sites for coenzyme A and phosphate are found in the alpha subunit. The sequence is that of Succinate--CoA ligase [ADP-forming] subunit beta from Enterobacter sp. (strain 638).